A 270-amino-acid polypeptide reads, in one-letter code: ParA family protein MPN_688 (270 aa).

This sequence belongs to the ParA family.

The protein is ParA family protein MPN_688 of Mycoplasma pneumoniae (strain ATCC 29342 / M129 / Subtype 1) (Mycoplasmoides pneumoniae).